The following is an 819-amino-acid chain: THO complex subunit 5B (819 aa).

Positions 285–332 are disordered; the sequence is ARQQSRKDSGMSSNTESSRLEDDGPDDDDDGQRRRKRPKKLTSKEGSD.

Belongs to the THOC5 family. Component of the THO complex, which is composed of THO1, THO2, THO3, THO5, THO6 and THO7.

The protein localises to the nucleus. Its function is as follows. Acts as a component of the THO subcomplex of the TREX complex which is thought to couple mRNA transcription, processing and nuclear export. This chain is THO complex subunit 5B (THO5B), found in Arabidopsis thaliana (Mouse-ear cress).